Reading from the N-terminus, the 311-residue chain is Bifunctional pinoresinol-lariciresinol reductase (311 aa).

NADP(+) contacts are provided by residues 10–16, arginine 35, and lysine 44; that span reads GGTGYLG. Catalysis depends on lysine 138, which acts as the Proton acceptor. Arginine 142 serves as a coordination point for NADP(+). Histidine 270 provides a ligand contact to substrate.

The protein belongs to the NmrA-type oxidoreductase family. Isoflavone reductase subfamily. In terms of assembly, dimer. As to expression, expressed in rhizomes, stems, and leaves.

The enzyme catalyses (-)-secoisolariciresinol + NADP(+) = (+)-lariciresinol + NADPH + H(+). It carries out the reaction (+)-lariciresinol + NADP(+) = (+)-pinoresinol + NADPH + H(+). Its pathway is aromatic compound metabolism; phenylpropanoid biosynthesis. Its function is as follows. Reductase involved in lignan biosynthesis. Also involved in the biosynthesis of etoposide, a chemotherapeutic compound of the topoisomerase inhibitor family. Catalyzes the enantioselective sequential conversion of (+)-pinoresinol into (+)-lariciresinol and of (+)-lariciresinol into (-)-secoisolariciresinol. Abstracts the 4R-hydride from the NADPH cofactor during catalysis. In Sinopodophyllum hexandrum (Himalayan may apple), this protein is Bifunctional pinoresinol-lariciresinol reductase.